Reading from the N-terminus, the 397-residue chain is Succinate--CoA ligase [ADP-forming] subunit beta (397 aa).

An ATP-grasp domain is found at 9-253 (KEILASYGVR…IREENPIEVE (245 aa)). ATP is bound by residues lysine 50, 57-59 (GRG), valine 106, and glutamate 116. Positions 208 and 222 each coordinate Mg(2+). Residues asparagine 273 and 330–332 (GIV) contribute to the substrate site.

It belongs to the succinate/malate CoA ligase beta subunit family. Heterotetramer of two alpha and two beta subunits. Mg(2+) is required as a cofactor.

It catalyses the reaction succinate + ATP + CoA = succinyl-CoA + ADP + phosphate. It carries out the reaction GTP + succinate + CoA = succinyl-CoA + GDP + phosphate. It functions in the pathway carbohydrate metabolism; tricarboxylic acid cycle; succinate from succinyl-CoA (ligase route): step 1/1. In terms of biological role, succinyl-CoA synthetase functions in the citric acid cycle (TCA), coupling the hydrolysis of succinyl-CoA to the synthesis of either ATP or GTP and thus represents the only step of substrate-level phosphorylation in the TCA. The beta subunit provides nucleotide specificity of the enzyme and binds the substrate succinate, while the binding sites for coenzyme A and phosphate are found in the alpha subunit. In Flavobacterium johnsoniae (strain ATCC 17061 / DSM 2064 / JCM 8514 / BCRC 14874 / CCUG 350202 / NBRC 14942 / NCIMB 11054 / UW101) (Cytophaga johnsonae), this protein is Succinate--CoA ligase [ADP-forming] subunit beta.